The sequence spans 128 residues: Protein BEX1 (128 aa).

Residues 1–37 (MESKEKRAVNNLSMENTNQENEEKEEKEQVANKGEPL) are disordered. Residue serine 105 is modified to Phosphoserine. The disordered stretch occupies residues 107-128 (SLRAVSTDPPHHDHHDEFCLMP). The segment covering 115 to 128 (PPHHDHHDEFCLMP) has biased composition (basic and acidic residues). A his cluster region spans residues 117–121 (HHDHH). Residue cysteine 125 coordinates Zn(2+).

It belongs to the BEX family. As to quaternary structure, interacts with neurotrophin receptor p75NTR/NGFR. Interacts with OMP. Post-translationally, phosphorylated. Phosphorylation of Ser-105 protects it from the proteasome. Ubiquitinated. Degraded by the proteasome.

The protein localises to the nucleus. It is found in the cytoplasm. Its function is as follows. Signaling adapter molecule involved in p75NTR/NGFR signaling. Plays a role in cell cycle progression and neuronal differentiation. Inhibits neuronal differentiation in response to nerve growth factor (NGF). May act as a link between the cell cycle and neurotrophic factor signaling, possibly by functioning as an upstream modulator of receptor signaling, coordinating biological responses to external signals with internal cellular states. In absence of reductive stress, acts as a pseudosubstrate for the CRL2(FEM1B) complex: associates with FEM1B via zinc, thereby preventing association between FEM1B and its substrates. In Macaca fascicularis (Crab-eating macaque), this protein is Protein BEX1 (BEX1).